The primary structure comprises 306 residues: HTH-type transcriptional regulator AlkR (306 aa).

Residues 207-305 (SNALAAIHAY…EQSPKHYRQQ (99 aa)) enclose the HTH araC/xylS-type domain. DNA-binding regions (H-T-H motif) lie at residues 224-245 (ESLADQCCMSRSKFATLFQSIV) and 272-295 (IQQIANKVGYSSETAFSQAFKRQF).

Its pathway is hydrocarbon metabolism; alkane degradation. Its function is as follows. This protein activates the expression of the alkane 1-monooxygenase AlkM. The sequence is that of HTH-type transcriptional regulator AlkR (alkR) from Acinetobacter baylyi (strain ATCC 33305 / BD413 / ADP1).